Here is a 298-residue protein sequence, read N- to C-terminus: Serpentine receptor class delta-34 (298 aa).

Helical transmembrane passes span 10–30 (SSIM…FTQV), 54–74 (ACFF…FAIP), 99–119 (MILL…VITY), 158–178 (LATN…IVFI), 207–227 (LTIQ…AHLI), and 242–262 (VLYM…IVTI).

The protein belongs to the nematode receptor-like protein srd family.

The protein localises to the membrane. The polypeptide is Serpentine receptor class delta-34 (srd-34) (Caenorhabditis elegans).